The sequence spans 268 residues: Tryptophan synthase alpha chain (268 aa).

Active-site proton acceptor residues include E49 and D60.

The protein belongs to the TrpA family. In terms of assembly, tetramer of two alpha and two beta chains.

It carries out the reaction (1S,2R)-1-C-(indol-3-yl)glycerol 3-phosphate + L-serine = D-glyceraldehyde 3-phosphate + L-tryptophan + H2O. It participates in amino-acid biosynthesis; L-tryptophan biosynthesis; L-tryptophan from chorismate: step 5/5. In terms of biological role, the alpha subunit is responsible for the aldol cleavage of indoleglycerol phosphate to indole and glyceraldehyde 3-phosphate. This chain is Tryptophan synthase alpha chain, found in Escherichia coli O157:H7.